The chain runs to 128 residues: Fluoride-specific ion channel FluC (128 aa).

Transmembrane regions (helical) follow at residues 5–25 (IVAI…LSIG), 35–55 (LGTL…VVAF), 67–87 (LFVI…SVEV), and 96–116 (FGWA…LTGL). Na(+) is bound by residues glycine 75 and threonine 78.

It belongs to the fluoride channel Fluc/FEX (TC 1.A.43) family.

The protein localises to the cell inner membrane. It catalyses the reaction fluoride(in) = fluoride(out). With respect to regulation, na(+) is not transported, but it plays an essential structural role and its presence is essential for fluoride channel function. In terms of biological role, fluoride-specific ion channel. Important for reducing fluoride concentration in the cell, thus reducing its toxicity. The sequence is that of Fluoride-specific ion channel FluC from Burkholderia pseudomallei (strain 1106a).